A 409-amino-acid chain; its full sequence is MRSGQCAAGAPVLQFTNCRILRGGTLLREDLWVRGGRILDPEKLFFEERRVADEQRDCGGRILAPGFIDVQINGGFGVDFSKATEDVGSGVALVARRLLSHGVTSFCPTLVTSPPEVYHKVLPQIPVKSGGPHGAGVLGVHLEGPFISREKRGAHPEAYLRSFEANAFHDVLATYGPLDNVCIVTLAPELDRSHEVIQALTAQGIRVSLGHSVADLRAAEVAVQSGATFITHLFNAMLPFHHRDPGIVGLLTSDQLPPGHCIFYGMIADGIHTNPAALRIAHRAHPQGLVLVTDAVPALGLGNGRHTLGQQEVEVDGLIAYIAGTKTLGGSIAPMDVCVRHFLQATGCSVESALEAASLHPAQMLGLEKTKGSLDFGADADFVVLDDTLHVQATYISGELVWQAEEAGP.

A divalent metal cation is bound at residue Glu-143. Residue 154-155 (AH) participates in substrate binding. A divalent metal cation contacts are provided by His-211 and His-232. Substrate is bound by residues 235 to 236 (NA), Arg-243, and 269 to 272 (DGIH). Asp-294 serves as the catalytic Proton donor/acceptor. A substrate-binding site is contributed by 328-330 (LGG).

It belongs to the metallo-dependent hydrolases superfamily. NagA family. The cofactor is a divalent metal cation.

The enzyme catalyses N-acetyl-D-glucosamine 6-phosphate + H2O = D-glucosamine 6-phosphate + acetate. It participates in amino-sugar metabolism; N-acetylneuraminate degradation. Functionally, hydrolyzes the N-glycolyl group from N-glycolylglucosamine 6-phosphate (GlcNGc-6-P) in the N-glycolylneuraminic acid (Neu5Gc) degradation pathway. This is N-acetylglucosamine-6-phosphate deacetylase (Amdhd2) from Mus musculus (Mouse).